Here is a 103-residue protein sequence, read N- to C-terminus: MHVKKDDIVVVISGKDKGKKGKILHAIPKKERIIVEGVNMVTKHQKPTQQSQQGGIIKQEAAIHVSNVLLWDKKANQGVRAGHKVLENGEKVRVSKKTGEVLD.

This sequence belongs to the universal ribosomal protein uL24 family. As to quaternary structure, part of the 50S ribosomal subunit.

Functionally, one of two assembly initiator proteins, it binds directly to the 5'-end of the 23S rRNA, where it nucleates assembly of the 50S subunit. In terms of biological role, one of the proteins that surrounds the polypeptide exit tunnel on the outside of the subunit. This Alkaliphilus metalliredigens (strain QYMF) protein is Large ribosomal subunit protein uL24.